The following is a 567-amino-acid chain: NADH-ubiquinone oxidoreductase chain 2 (567 aa).

14 helical membrane-spanning segments follow: residues 2-22 (LILSLFILIIYSSIINNIDTI), 43-63 (IGIIIILYSLYIFKDISLSYI), 85-105 (NIFNIYIIFLLLIVIISLLSI), 133-153 (LNIYYISIIIFNIIGLILLLT), 158-178 (ISIFISIELQSYSLYILTGII), 189-209 (LFYYLIGGIGSIIILYGISLL), 236-256 (ILIGWLFIIIGLLIKIGAAPM), 274-294 (YISLIPKISILSYILLIILNL), 312-332 (LIYILSIIIILSLIIGSIGGL), 340-360 (ILAYSGLLNIGYFLLIILSLI), 372-392 (IIYITQYCFNHISIFILLIIA), 423-443 (LIFCLIIIIGSFIGIPPLFGF), 459-479 (LFLSLLLIISSIISSIYYLYF), and 530-550 (VGNYITYILSSYILIILFNFI).

This sequence belongs to the complex I subunit 2 family.

The protein resides in the mitochondrion inner membrane. The catalysed reaction is a ubiquinone + NADH + 5 H(+)(in) = a ubiquinol + NAD(+) + 4 H(+)(out). Its function is as follows. Core subunit of the mitochondrial membrane respiratory chain NADH dehydrogenase (Complex I) that is believed to belong to the minimal assembly required for catalysis. Complex I functions in the transfer of electrons from NADH to the respiratory chain. The immediate electron acceptor for the enzyme is believed to be ubiquinone. The chain is NADH-ubiquinone oxidoreductase chain 2 (ND2) from Wickerhamomyces canadensis (Yeast).